Reading from the N-terminus, the 326-residue chain is Vitamin B12 import system permease protein BtuC (326 aa).

A run of 9 helical transmembrane segments spans residues 15-35 (WLLC…CAGE), 61-81 (LAVL…QALF), 88-108 (PGLL…VLLG), 112-132 (LPNW…TLIL), 146-166 (LLAG…AIYF), 184-204 (GGVD…LLWI), 240-260 (GWMV…GLVI), 274-294 (VLLP…DVVA), and 302-322 (ELPI…WLLL).

This sequence belongs to the binding-protein-dependent transport system permease family. FecCD subfamily. As to quaternary structure, the complex is composed of two ATP-binding proteins (BtuD), two transmembrane proteins (BtuC) and a solute-binding protein (BtuF).

The protein resides in the cell inner membrane. In terms of biological role, part of the ABC transporter complex BtuCDF involved in vitamin B12 import. Involved in the translocation of the substrate across the membrane. The chain is Vitamin B12 import system permease protein BtuC from Escherichia coli (strain SE11).